Here is a 66-residue protein sequence, read N- to C-terminus: Large ribosomal subunit protein bL35 (66 aa).

Belongs to the bacterial ribosomal protein bL35 family.

This Borreliella afzelii (strain PKo) (Borrelia afzelii) protein is Large ribosomal subunit protein bL35.